A 363-amino-acid polypeptide reads, in one-letter code: Phosphoribosylformylglycinamidine cyclo-ligase (363 aa).

It belongs to the AIR synthase family.

It is found in the cytoplasm. It carries out the reaction 2-formamido-N(1)-(5-O-phospho-beta-D-ribosyl)acetamidine + ATP = 5-amino-1-(5-phospho-beta-D-ribosyl)imidazole + ADP + phosphate + H(+). It functions in the pathway purine metabolism; IMP biosynthesis via de novo pathway; 5-amino-1-(5-phospho-D-ribosyl)imidazole from N(2)-formyl-N(1)-(5-phospho-D-ribosyl)glycinamide: step 2/2. This Bartonella tribocorum (strain CIP 105476 / IBS 506) protein is Phosphoribosylformylglycinamidine cyclo-ligase.